The chain runs to 483 residues: Probable cysteine protease ATG4 (483 aa).

Cysteine 141 (nucleophile) is an active-site residue. Residues aspartate 315 and histidine 317 contribute to the active site.

Belongs to the peptidase C54 family.

Its subcellular location is the cytoplasm. It localises to the nucleus. The protein localises to the preautophagosomal structure. It catalyses the reaction [protein]-C-terminal L-amino acid-glycyl-phosphatidylethanolamide + H2O = [protein]-C-terminal L-amino acid-glycine + a 1,2-diacyl-sn-glycero-3-phosphoethanolamine. In terms of biological role, cysteine protease that plays a key role in cytoplasm to vacuole transport (Cvt) and autophagy by mediating both proteolytic activation and delipidation of ATG8. Required for selective autophagic degradation of the nucleus (nucleophagy) as well as for mitophagy which contributes to regulate mitochondrial quantity and quality by eliminating the mitochondria to a basal level to fulfill cellular energy requirements and preventing excess ROS production. The protease activity is required for proteolytic activation of ATG8: cleaves the C-terminal amino acid of ATG8 to reveal a C-terminal glycine. ATG8 ubiquitin-like activity requires the exposure of the glycine at the C-terminus for its conjugation to phosphatidylethanolamine (PE) and its insertion to membranes, which is necessary for autophagy. The ATG8-PE conjugate mediates tethering between adjacent membranes and stimulates membrane hemifusion, leading to expansion of the autophagosomal membrane during autophagy. In addition to the protease activity, also catalyzes deconjugation of PE-conjugated forms of ATG8 during macroautophagy: ATG8 delipidation is required to release the protein from membranes, which facilitates multiple events during macroautophagy, and especially for efficient autophagosome biogenesis, the assembly of ATG9-containing tubulovesicular clusters into phagophores/autophagosomes, and for the disassembly of PAS-associated ATG components. ATG8 delipidation by ATG4 also recycles ATG8-PE generated on inappropriate membranes to maintain a reservoir of unlipidated ATG8 that is required for autophagosome formation at the PAS. This is Probable cysteine protease ATG4 (ATG4) from Candida glabrata (strain ATCC 2001 / BCRC 20586 / JCM 3761 / NBRC 0622 / NRRL Y-65 / CBS 138) (Yeast).